A 173-amino-acid polypeptide reads, in one-letter code: Large ribosomal subunit protein uL10 (173 aa).

The protein belongs to the universal ribosomal protein uL10 family. Part of the ribosomal stalk of the 50S ribosomal subunit. The N-terminus interacts with L11 and the large rRNA to form the base of the stalk. The C-terminus forms an elongated spine to which L12 dimers bind in a sequential fashion forming a multimeric L10(L12)X complex.

Forms part of the ribosomal stalk, playing a central role in the interaction of the ribosome with GTP-bound translation factors. In Beutenbergia cavernae (strain ATCC BAA-8 / DSM 12333 / CCUG 43141 / JCM 11478 / NBRC 16432 / NCIMB 13614 / HKI 0122), this protein is Large ribosomal subunit protein uL10.